The following is a 147-amino-acid chain: Hemoglobin anodic subunit beta (147 aa).

In terms of domain architecture, Globin spans 2-147; sequence EWTDGERTAI…VTSALARQYH (146 aa). Heme b-binding residues include H63 and H92.

The protein belongs to the globin family. In terms of assembly, heterotetramer of two alpha chains and two beta chains. As to expression, red blood cells.

Involved in oxygen transport from gills to the various peripheral tissues. The polypeptide is Hemoglobin anodic subunit beta (Gymnothorax unicolor (Brown moray)).